The sequence spans 99 residues: UPF0235 protein Neut_2146 (99 aa).

The protein belongs to the UPF0235 family.

In Nitrosomonas eutropha (strain DSM 101675 / C91 / Nm57), this protein is UPF0235 protein Neut_2146.